Reading from the N-terminus, the 467-residue chain is Geranylgeranyl diphosphate reductase, chloroplastic (467 aa).

Residues 1-43 (MATTVTLKSFTGLRQSSTEQTNFVSHVPSSLSLPQRRTSLRVT) constitute a chloroplast transit peptide.

It belongs to the geranylgeranyl reductase family. ChlP subfamily. Part of the FLU-containing chloroplast membrane complex composed of FLU, CRD1, PORB, PORC, CHLP and HEMA1.

The protein localises to the plastid. Its subcellular location is the chloroplast membrane. It catalyses the reaction phytyl diphosphate + 3 NADP(+) = geranylgeranyl diphosphate + 3 NADPH + 3 H(+). It participates in porphyrin-containing compound metabolism; chlorophyll biosynthesis. The protein operates within cofactor biosynthesis; tocopherol biosynthesis. Its function is as follows. Catalyzes the reduction of geranylgeranyl diphosphate to phytyl diphosphate, providing phytol for both tocopherol and chlorophyll synthesis. The sequence is that of Geranylgeranyl diphosphate reductase, chloroplastic (CHLP) from Arabidopsis thaliana (Mouse-ear cress).